The following is a 323-amino-acid chain: Phosphatidylethanolamine:ceramide ethanolaminephosphotransferase (323 aa).

The Cytoplasmic portion of the chain corresponds to 1–26; that stretch reads MAVPPVEMYSGSFWNRMRKPLPLRTQ. The helical transmembrane segment at 27-47 threads the bilayer; sequence VIRFTVVFVIVSFILVVALQI. At 48-74 the chain is on the extracellular side; it reads THERMPDPKVTKPLPDLGFELLTKVPG. The helical transmembrane segment at 75–95 threads the bilayer; that stretch reads MYVLADCCIGFLNILSVFTAF. At 96–147 the chain is on the cytoplasmic side; it reads KLYLLHRHCVGSGEPELPCNIPGVSRFFLSVWLCKENCRIELRNIHTIAWIR. A helical membrane pass occupies residues 148-168; the sequence is FITSYALLLLSRSIIMVVTSL. Topologically, residues 169-187 are extracellular; sequence PNPDDLCQNPPKIENRVKD. Residues 188 to 208 traverse the membrane as a helical segment; it reads ILLTVLTAGAGSIHCGDLMYS. The Cytoplasmic portion of the chain corresponds to 209–233; that stretch reads GHTVILTLHLMFHWIYGAMVHWSFR. The chain crosses the membrane as a helical span at residues 234-254; it reads PVVTVVAIFGYYCIVASRFHY. The Extracellular segment spans residues 255–257; that stretch reads TDD. The chain crosses the membrane as a helical span at residues 258–278; the sequence is VLVAIYLTIATFIAVGHNADG. The Cytoplasmic portion of the chain corresponds to 279–323; sequence APWQLQLFIRWWPCCGANSREVAEDGVPVAIVIKNEEMMNFEGKS.

Belongs to the sphingomyelin synthase family.

It is found in the membrane. The enzyme catalyses an N-acylsphing-4-enine + a 1,2-diacyl-sn-glycero-3-phosphoethanolamine = an N-acylsphing-4-enine 1-phosphoethanolamine + a 1,2-diacyl-sn-glycerol. It catalyses the reaction an N-acylsphinganine + a 1,2-diacyl-sn-glycero-3-phosphoethanolamine = an N-acylsphinganine-1-phosphoethanolamine + a 1,2-diacyl-sn-glycerol. Predominantly synthesizes ethanolamine-phosphorylceramide (EPC), with minimal sphingomyelin (SM)/inositol phosphorylceramide (IPC) synthase activity. Specificity is likely to be defined by residues in the lumenal catalytic domain that interact with the polar head groups of the phospholipid donors. EPC is synthesized by both stages of the parasite life cycle, bloodstream forms (BSF) and procyclic forms (PCF), by transferring the phosphoethanolamine from a 1,2-diacyl-sn-glycero-3-phosphoethanolamine to an N-acylsphing-4-enine (ceramide) or an N-acylsphinganine (dihydroceramide). Similarly, SM is synthesized by transferring the phosphocholine from a 1,2-diacyl-sn-glycero-3-phosphocholine to ceramide or dihydroceramide by BSF and PCF, while IPC is confined to PCF. The ceramide/dihydroceramide ratios are skewed towards dihydroceramide in PCF parasites and ceramide in BSF parasites, this is likely due to differential expression and/or regulation of dihydroceramide desaturase, the enzyme responsible for converting dihydroceramide to ceramide. This chain is Phosphatidylethanolamine:ceramide ethanolaminephosphotransferase, found in Trypanosoma brucei brucei.